The primary structure comprises 374 residues: Guanine nucleotide-binding protein subunit alpha-15 (374 aa).

The G-alpha domain occupies 41–374 (GELKLLLLGT…ARYLDEINLL (334 aa)). Residues 44–57 (KLLLLGTGESGKST) are G1 motif. GTP contacts are provided by residues 49 to 56 (GTGESGKS), 183 to 189 (LRSRMPT), 208 to 212 (DVGGQ), 277 to 280 (NKTD), and A346. Positions 56 and 189 each coordinate Mg(2+). The interval 181 to 189 (DVLRSRMPT) is G2 motif. The G3 motif stretch occupies residues 204 to 213 (LRIVDVGGQK). A G4 motif region spans residues 273-280 (ILFLNKTD). Residues 344–349 (TCATDT) form a G5 motif region.

It belongs to the G-alpha family. G(q) subfamily. G proteins are composed of 3 units; alpha, beta and gamma. The alpha chain contains the guanine nucleotide binding site.

Functionally, guanine nucleotide-binding proteins (G proteins) are involved as modulators or transducers in various transmembrane signaling systems. The protein is Guanine nucleotide-binding protein subunit alpha-15 (GNA15) of Oryctolagus cuniculus (Rabbit).